A 1060-amino-acid polypeptide reads, in one-letter code: Histone lysine demethylase PHF8 (1060 aa).

The PHD-type zinc-finger motif lies at 41-92; it reads PVYCLCRLPYDVTRFMIECDMCQDWFHGSCVGVEEEKAADIDLYHCPNCEVL. A Phosphoserine; by CDK1 modification is found at serine 69. The disordered stretch occupies residues 100–120; it reads KRRGSSKGHDTHKGKPVKTGS. A linker region spans residues 101 to 115; the sequence is RRGSSKGHDTHKGKP. The residue at position 120 (serine 120) is a Phosphoserine; by CDK1. The region spanning 231-387 is the JmjC domain; the sequence is FSDTRLSNLV…MQLKAYEIEK (157 aa). Threonine 280 lines the substrate pocket. Histidine 283 and aspartate 285 together coordinate Fe cation. Position 300 (lysine 300) interacts with substrate. Fe cation is bound at residue histidine 355. Residues 508–517 are compositionally biased toward polar residues; that stretch reads AHSTSVSMSR. Residues 508–534 form a disordered region; sequence AHSTSVSMSRLSLPSKNGSKKKGLKPK. Serine 651 bears the Phosphoserine mark. At tyrosine 704 the chain carries Phosphotyrosine. 2 positions are modified to phosphothreonine: threonine 705 and threonine 706. Serine 722 is modified (phosphoserine). 3 disordered regions span residues 768–840, 852–902, and 915–1046; these read QSSS…EQDS, YPSL…GTRV, and KLAQ…KQRL. Low complexity-rich tracts occupy residues 769-778 and 785-804; these read SSSSSPATSS and GGQD…VSNS. A phosphoserine mark is found at serine 804, serine 826, serine 834, serine 854, serine 857, and serine 880. The span at 826-839 shows a compositional bias: acidic residues; it reads SEEEEENASLDEQD. A compositionally biased stretch (basic and acidic residues) spans 891–900; sequence KQDRPVREGT. The span at 924–934 shows a compositional bias: basic residues; sequence AQKKKYIKKKP. Positions 1018–1030 are enriched in polar residues; it reads RRPSVGSQSNQAG.

The protein belongs to the JHDM1 histone demethylase family. JHDM1D subfamily. As to quaternary structure, interacts with POLR1B, UBTF, SETD1A, HCFC1, E2F1 and ZNF711. Interacts with ZNF263; recruited to the SIX3 promoter along with other proteins involved in chromatin modification and transcriptional corepression where it contributes to transcriptional repression. The cofactor is Fe(2+). Phosphorylation at Ser-69 and Ser-120 are required for dissociation from chromatin and accumulation of H4K20Me1 levels during prophase.

The protein localises to the nucleus. The protein resides in the nucleolus. It carries out the reaction N(6),N(6)-dimethyl-L-lysyl(36)-[histone H3] + 2 2-oxoglutarate + 2 O2 = L-lysyl(36)-[histone H3] + 2 formaldehyde + 2 succinate + 2 CO2. It catalyses the reaction N(6),N(6)-dimethyl-L-lysyl(9)-[histone H3] + 2 2-oxoglutarate + 2 O2 = L-lysyl(9)-[histone H3] + 2 formaldehyde + 2 succinate + 2 CO2. Its function is as follows. Histone lysine demethylase with selectivity for the di- and monomethyl states that plays a key role cell cycle progression, rDNA transcription and brain development. Demethylates mono- and dimethylated histone H3 'Lys-9' residue (H3K9Me1 and H3K9Me2), dimethylated H3 'Lys-27' (H3K27Me2) and monomethylated histone H4 'Lys-20' residue (H4K20Me1). Acts as a transcription activator as H3K9Me1, H3K9Me2, H3K27Me2 and H4K20Me1 are epigenetic repressive marks. Involved in cell cycle progression by being required to control G1-S transition. Acts as a coactivator of rDNA transcription, by activating polymerase I (pol I) mediated transcription of rRNA genes. Required for brain development, probably by regulating expression of neuron-specific genes. Only has activity toward H4K20Me1 when nucleosome is used as a substrate and when not histone octamer is used as substrate. May also have weak activity toward dimethylated H3 'Lys-36' (H3K36Me2), however, the relevance of this result remains unsure in vivo. Specifically binds trimethylated 'Lys-4' of histone H3 (H3K4me3), affecting histone demethylase specificity: has weak activity toward H3K9Me2 in absence of H3K4me3, while it has high activity toward H3K9me2 when binding H3K4me3. Positively modulates transcription of histone demethylase KDM5C, acting synergistically with transcription factor ARX; synergy may be related to enrichment of histone H3K4me3 in regulatory elements. The sequence is that of Histone lysine demethylase PHF8 (PHF8) from Homo sapiens (Human).